The sequence spans 447 residues: N-succinylarginine dihydrolase (447 aa).

Residues 19–28, N110, and 137–138 each bind substrate; these read AGLSFGNEAS and HR. Residue E174 is part of the active site. R212 contributes to the substrate binding site. Residue H248 is part of the active site. 2 residues coordinate substrate: D250 and N359. Residue C365 is the Nucleophile of the active site.

It belongs to the succinylarginine dihydrolase family. Homodimer.

The enzyme catalyses N(2)-succinyl-L-arginine + 2 H2O + 2 H(+) = N(2)-succinyl-L-ornithine + 2 NH4(+) + CO2. It participates in amino-acid degradation; L-arginine degradation via AST pathway; L-glutamate and succinate from L-arginine: step 2/5. Its function is as follows. Catalyzes the hydrolysis of N(2)-succinylarginine into N(2)-succinylornithine, ammonia and CO(2). This Salmonella typhimurium (strain LT2 / SGSC1412 / ATCC 700720) protein is N-succinylarginine dihydrolase.